The following is a 125-amino-acid chain: Cu-Zn superoxide dismutase-like protein (125 aa).

A disulfide bridge links Cys-52 with Cys-102.

Belongs to the Cu-Zn superoxide dismutase family.

The protein resides in the host cytoplasm. Virion protein with no enzymatic activity. This is Cu-Zn superoxide dismutase-like protein from Camelpox virus (strain M-96).